Consider the following 635-residue polypeptide: 1-deoxy-D-xylulose-5-phosphate synthase (635 aa).

Residues His77 and Gly118–Ala120 contribute to the thiamine diphosphate site. Residue Asp149 coordinates Mg(2+). Residues Gly150–Ser151, Asn178, Phe290, and Glu375 contribute to the thiamine diphosphate site. Asn178 is a binding site for Mg(2+).

Belongs to the transketolase family. DXPS subfamily. As to quaternary structure, homodimer. The cofactor is Mg(2+). Requires thiamine diphosphate as cofactor.

It catalyses the reaction D-glyceraldehyde 3-phosphate + pyruvate + H(+) = 1-deoxy-D-xylulose 5-phosphate + CO2. It participates in metabolic intermediate biosynthesis; 1-deoxy-D-xylulose 5-phosphate biosynthesis; 1-deoxy-D-xylulose 5-phosphate from D-glyceraldehyde 3-phosphate and pyruvate: step 1/1. Catalyzes the acyloin condensation reaction between C atoms 2 and 3 of pyruvate and glyceraldehyde 3-phosphate to yield 1-deoxy-D-xylulose-5-phosphate (DXP). The polypeptide is 1-deoxy-D-xylulose-5-phosphate synthase (Chlorobium phaeovibrioides (strain DSM 265 / 1930) (Prosthecochloris vibrioformis (strain DSM 265))).